The sequence spans 341 residues: 2-keto-4-carboxy-3-hexenedioate hydratase (341 aa).

Residues His8 and His10 each contribute to the Zn(2+) site. 71 to 73 serves as a coordination point for substrate; it reads RAS. His178 is a binding site for Zn(2+). Tyr194 and His223 together coordinate substrate. Glu284 acts as the Proton donor/acceptor in catalysis. Arg290 contacts substrate.

This sequence belongs to the metallo-dependent hydrolases superfamily. As to quaternary structure, homodimer. Zn(2+) is required as a cofactor.

It carries out the reaction (3Z)-2-oxo-4-carboxy-3-hexenedioate + H2O = (2S)-2-hydroxy-4-oxobutane-1,2,4-tricarboxylate. Its pathway is secondary metabolite metabolism; lignin degradation. Functionally, contributes to the degradation of lignin at the level of the protocatechuate 4,5-cleavage pathway. Catalyzes the hydration of the double bond of (3Z)-2-keto-4-carboxy-3-hexenedioate (KCH) to (4S)-4-carboxy-4-hydroxy-2-oxoadipate (CHA, also named (2S)-2-hydroxy-4-oxobutane-1,2,4-tricarboxylate). Is involved in the catabolism of both vanillate and syringate. The sequence is that of 2-keto-4-carboxy-3-hexenedioate hydratase from Sphingobium sp. (strain NBRC 103272 / SYK-6).